A 75-amino-acid polypeptide reads, in one-letter code: Beta-defensin 42 (75 aa).

The signal sequence occupies residues 1–21; sequence MNLRLSCLLFILVTSLPAGRC. 3 cysteine pairs are disulfide-bonded: C33-C60, C40-C54, and C44-C61.

It belongs to the beta-defensin family. Epididymis-specific, with highest levels in the initial segment and distal caput.

The protein resides in the secreted. In terms of biological role, has bactericidal activity. May play a role in the antimicrobial protection of sperm and urogenital tract epithelia. This is Beta-defensin 42 from Mus musculus (Mouse).